We begin with the raw amino-acid sequence, 136 residues long: Membrane-bound negative regulator YvrL (136 aa).

Helical transmembrane passes span 18-38, 46-66, 83-103, and 106-126; these read LLAA…LFSL, AAHV…FEPF, LFIL…AHTT, and LISD…VFLI.

It is found in the cell membrane. Its function is as follows. Negatively regulates RNA polymerase sigma factor SigO-dependent transcription. Prevents the expression or secretion of OxdC under nonstress conditions. May act as an anti-sigma factor. The chain is Membrane-bound negative regulator YvrL (yvrL) from Bacillus subtilis (strain 168).